The sequence spans 387 residues: Succinate--CoA ligase [ADP-forming] subunit beta (387 aa).

Residues K46, 53 to 55 (GRG), E99, C102, and E107 each bind ATP. The Mg(2+) site is built by N196 and D210. Residues N261 and 318 to 320 (GIV) contribute to the substrate site.

Belongs to the succinate/malate CoA ligase beta subunit family. Heterotetramer of two alpha and two beta subunits. Mg(2+) is required as a cofactor.

It catalyses the reaction succinate + ATP + CoA = succinyl-CoA + ADP + phosphate. The catalysed reaction is GTP + succinate + CoA = succinyl-CoA + GDP + phosphate. The protein operates within carbohydrate metabolism; tricarboxylic acid cycle; succinate from succinyl-CoA (ligase route): step 1/1. Functionally, succinyl-CoA synthetase functions in the citric acid cycle (TCA), coupling the hydrolysis of succinyl-CoA to the synthesis of either ATP or GTP and thus represents the only step of substrate-level phosphorylation in the TCA. The beta subunit provides nucleotide specificity of the enzyme and binds the substrate succinate, while the binding sites for coenzyme A and phosphate are found in the alpha subunit. In Campylobacter hominis (strain ATCC BAA-381 / DSM 21671 / CCUG 45161 / LMG 19568 / NCTC 13146 / CH001A), this protein is Succinate--CoA ligase [ADP-forming] subunit beta.